The primary structure comprises 335 residues: Ketol-acid reductoisomerase (NADP(+)) 2 (335 aa).

The KARI N-terminal Rossmann domain occupies 1 to 180 (MKTYYEQDAN…GCTRAGVIET (180 aa)). NADP(+)-binding positions include 24 to 27 (YGSQ), R47, S51, and 81 to 84 (DEQQ). The active site involves H106. G132 provides a ligand contact to NADP(+). The 146-residue stretch at 181–326 (TFQEETETDL…EELREMMSWI (146 aa)) folds into the KARI C-terminal knotted domain. Residues D189, E193, E225, and E229 each contribute to the Mg(2+) site. S250 lines the substrate pocket.

It belongs to the ketol-acid reductoisomerase family. Requires Mg(2+) as cofactor.

It carries out the reaction (2R)-2,3-dihydroxy-3-methylbutanoate + NADP(+) = (2S)-2-acetolactate + NADPH + H(+). The enzyme catalyses (2R,3R)-2,3-dihydroxy-3-methylpentanoate + NADP(+) = (S)-2-ethyl-2-hydroxy-3-oxobutanoate + NADPH + H(+). It functions in the pathway amino-acid biosynthesis; L-isoleucine biosynthesis; L-isoleucine from 2-oxobutanoate: step 2/4. It participates in amino-acid biosynthesis; L-valine biosynthesis; L-valine from pyruvate: step 2/4. Involved in the biosynthesis of branched-chain amino acids (BCAA). Catalyzes an alkyl-migration followed by a ketol-acid reduction of (S)-2-acetolactate (S2AL) to yield (R)-2,3-dihydroxy-isovalerate. In the isomerase reaction, S2AL is rearranged via a Mg-dependent methyl migration to produce 3-hydroxy-3-methyl-2-ketobutyrate (HMKB). In the reductase reaction, this 2-ketoacid undergoes a metal-dependent reduction by NADPH to yield (R)-2,3-dihydroxy-isovalerate. The polypeptide is Ketol-acid reductoisomerase (NADP(+)) 2 (Bacillus thuringiensis subsp. konkukian (strain 97-27)).